The following is a 391-amino-acid chain: Putative gustatory receptor 36b (391 aa).

Topologically, residues 1–4 are cytoplasmic; it reads MVDW. A helical membrane pass occupies residues 5–25; sequence VVLLLKAVHIYCYLIGLSNFE. Topologically, residues 26–39 are extracellular; the sequence is FDCRTGRVFKSRRC. The helical transmembrane segment at 40–60 threads the bilayer; that stretch reads TIYAFMANIFILITIIYNFTA. Residues 61–74 are Cytoplasmic-facing; the sequence is HGDTNLLFQSANKL. A helical transmembrane segment spans residues 75–95; sequence HEYVIIIMSGLKIVAGLITVL. Residues 96–127 are Extracellular-facing; the sequence is NRWLQRGQMMQLVKDVIRLYMINPQLKSMIRW. The helical transmembrane segment at 128–148 threads the bilayer; the sequence is GILLKAFISFAIELLQVTLSV. Topologically, residues 149–165 are cytoplasmic; sequence DALDRQGTAEMMGLLVK. A helical membrane pass occupies residues 166–186; that stretch reads LCVSFIMNLAISQHFLVILLI. Residues 187–284 are Extracellular-facing; sequence RAQYRIMNAK…YKYGPHNLKL (98 aa). The chain crosses the membrane as a helical span at residues 285–305; sequence SAKTSIIVCILITLFYLDALV. Topologically, residues 306 to 363 are cytoplasmic; it reads NCNNMLRVLDHHKDFLGLLEERTVFASSLDIRLEESFESLQLQLARNPLKINVMGMFP. Residues 364 to 384 form a helical membrane-spanning segment; it reads ITRGSTAAMCASVIVNSIFLI. The Extracellular segment spans residues 385-391; the sequence is QFDMEFF.

This sequence belongs to the insect chemoreceptor superfamily. Gustatory receptor (GR) family. Gr22e subfamily. As to expression, expressed in neurons of the terminal external chemosensory organ of larvae.

It is found in the cell membrane. Probable gustatory receptor which mediates acceptance or avoidance behavior, depending on its substrates. This chain is Putative gustatory receptor 36b (Gr36b), found in Drosophila melanogaster (Fruit fly).